The chain runs to 407 residues: Na(+)-translocating NADH-quinone reductase subunit F (407 aa).

Residues 3 to 23 form a helical membrane-spanning segment; the sequence is IILGVVMFTLIVLALTVMILF. Positions 32-126 constitute a 2Fe-2S ferredoxin-type domain; sequence GDITIDINED…NLKIELPEEI (95 aa). [2Fe-2S] cluster-binding residues include Cys69, Cys75, Cys78, and Cys110. An FAD-binding FR-type domain is found at 129 to 269; that stretch reads VKKWECEVIS…SGPFGEFFAK (141 aa).

This sequence belongs to the NqrF family. In terms of assembly, composed of six subunits; NqrA, NqrB, NqrC, NqrD, NqrE and NqrF. [2Fe-2S] cluster serves as cofactor. The cofactor is FAD.

Its subcellular location is the cell inner membrane. The catalysed reaction is a ubiquinone + n Na(+)(in) + NADH + H(+) = a ubiquinol + n Na(+)(out) + NAD(+). Its function is as follows. NQR complex catalyzes the reduction of ubiquinone-1 to ubiquinol by two successive reactions, coupled with the transport of Na(+) ions from the cytoplasm to the periplasm. The first step is catalyzed by NqrF, which accepts electrons from NADH and reduces ubiquinone-1 to ubisemiquinone by a one-electron transfer pathway. This is Na(+)-translocating NADH-quinone reductase subunit F from Yersinia enterocolitica serotype O:8 / biotype 1B (strain NCTC 13174 / 8081).